The primary structure comprises 347 residues: MSETSIQPLLDILFQGKALTREQTASLFSVLIQGEMNETVMAGMLMALKIRGETIEEISGAADAMRAAAKPFPYPESSRSQGVIDIVGTGGDGFNTINISTTAAFVAAAAGAKVAKHGNRSVSSKSGSSDLLAQFGIDLTMSPELASHCLEALNLCFLFAPHYHGGVKHAVPVRQTLKTRTLFNVLGPLINPARPEFMLLGVYSAELVTPIARVLQALGTQRAMVVHGSGLDEVALHGSTQVAELKDGEIIEYQLTPADFGVPQAHISELEGGEPAHNALITQQILQGHGCDAHTHAVAINAGCALYLCGLSESVKMGTALALSTIKTGKAYELLHKLATVSSQSQE.

5-phospho-alpha-D-ribose 1-diphosphate is bound by residues G88, 91 to 92 (GD), T96, 98 to 101 (NIST), 116 to 124 (KHGNRSVSS), and S128. An anthranilate-binding site is contributed by G88. Mg(2+) is bound at residue S100. N119 is a binding site for anthranilate. Residue R174 participates in anthranilate binding. The Mg(2+) site is built by D232 and E233.

Belongs to the anthranilate phosphoribosyltransferase family. Homodimer. Requires Mg(2+) as cofactor.

It carries out the reaction N-(5-phospho-beta-D-ribosyl)anthranilate + diphosphate = 5-phospho-alpha-D-ribose 1-diphosphate + anthranilate. Its pathway is amino-acid biosynthesis; L-tryptophan biosynthesis; L-tryptophan from chorismate: step 2/5. Its function is as follows. Catalyzes the transfer of the phosphoribosyl group of 5-phosphorylribose-1-pyrophosphate (PRPP) to anthranilate to yield N-(5'-phosphoribosyl)-anthranilate (PRA). The polypeptide is Anthranilate phosphoribosyltransferase (Shewanella oneidensis (strain ATCC 700550 / JCM 31522 / CIP 106686 / LMG 19005 / NCIMB 14063 / MR-1)).